The sequence spans 511 residues: mRNA export factor (511 aa).

Over residues 1–15 (MATDIDMLIDLGLDL) the composition is skewed to low complexity. Residues 1-244 (MATDIDMLID…ERKAPAADTI (244 aa)) are disordered. A Nuclear export signal motif is present at residues 5–17 (IDMLIDLGLDLSD). 2 positions are modified to phosphoserine; by host: Ser-16 and Ser-18. Acidic residues-rich tracts occupy residues 16–26 (SDSDLDEDPPE) and 35–51 (LESD…EDME). The tract at residues 104 to 112 (VWSRLGARR) is interaction with host ALYREF. Positions 110–138 (ARRPSCSPEQHGGKVARLQPPPTKAQPAR) match the Nuclear localization signal motif. Phosphoserine; by host is present on Ser-114. At Arg-138 the chain carries Dimethylated arginine; by host. The RGG-box stretch occupies residues 138–152 (RGGRRGRRRGRGRGG). A compositionally biased stretch (basic residues) spans 139–149 (GGRRGRRRGRG). Arg-148 bears the Omega-N-methylarginine; by host mark. Arg-150 is subject to Dimethylated arginine; by host. Positions 213–232 (APPPLMTLAIAPPPADPRAP) are enriched in pro residues. The Zn(2+) site is built by Cys-399, His-478, Cys-482, and Cys-487. Residues 399-487 (CYLKARGLCG…HRQECSSRVC (89 aa)) form a CHC2-type zinc finger.

The protein belongs to the HHV-1 ICP27 protein family. Interacts with host RBP1; this interaction facilitates the RNA polymerase recruitment to viral transcription sites. Interacts (via the RGG box) with host ALYREF/THOC4; this interaction recruits ALYREF to viral replication compartments and probably directs viral mRNA to the TAP/NFX1 pathway. Interacts (via the RGG box) with host SRPK1; this interaction relocalizes SRPK1 to the nucleus and seems to alter its activity. Interacts with ICP4; this interaction modulates ICP4 DNA-binding activity. Interacts with host NXF1; this interaction allows efficient export of HSV-1 early and late transcripts. In terms of processing, methylated within the RGG box possibly by host PRMT1. When hypomethylated, ICP27 is exported to the cytoplasm earlier and more rapidly. Post-translationally, phosphorylated.

Its subcellular location is the host cytoplasm. The protein resides in the host nucleus. Its function is as follows. Multifunctional regulator of the expression of viral genes that contributes to the shutoff of host protein synthesis and mediates nuclear export of viral intronless mRNAs. Early in infection, this immediate early (EI) protein mediates the inhibition of cellular splicing. This results in the accumulation of unprocessed 3'end pre-mRNAs which can't be exported from the nucleus. Cellular protein synthesis is thereby shut off early after virus infection. Later in the infection, it helps recruit cellular RNA polymerase II to viral replication sites and promotes the nuclear export of viral intronless mRNAs by interacting with mRNAs and host NXF1/TAP. ICP27 binds to NUP62 which may provide facilitated viral mRNA export and may compete with some host cell transport receptors for binding and inhibit cellular nucleocytoplasmic transport pathways. Also stimulates translation of viral transcripts. Repression of host gene expression blocks the cell cycle at the G1 phase and prevents apoptosis. Seems to silence the 3' splice site of the promyelocytic leukemia (PML) intron 7a, thereby switching PML isoforms from PML-II to PML-V. This could be linked to the accelerated mRNA export induced by ICP27 which might not provide sufficient time for PML pre-mRNA to be spliced in the nucleus. In Human herpesvirus 1 (strain HFEM) (HHV-1), this protein is mRNA export factor.